The chain runs to 297 residues: MKRPDYRTLQALDAVIRERGFERAAQKLCITQSAVSQRIKQLENLFGQPLLVRTIPPRPTEQGQKLLALLHQVELLEEEWLGNETNSDIPLLLSLAVNADSLATWLLPALQSVLVDSPIRLNLQVEDETRTQERLRRGEVVGAVSIQSQPLPSCLVDKLGALDYLFVASPTFAARYFPNGVTRSALLRAPAVAFDHLDDMHQAFLQQNFDLSPGSVPCHIVNSSEAFVQLARQGTTCCMIPHLQIERELANNELVDLTPGLFQRRMLYWHRFAPESRMMRKVTDALLSHGHQVLRQS.

The HTH lysR-type domain occupies 4-60 (PDYRTLQALDAVIRERGFERAAQKLCITQSAVSQRIKQLENLFGQPLLVRTIPPRPT). The H-T-H motif DNA-binding region spans 21 to 40 (FERAAQKLCITQSAVSQRIK).

The protein belongs to the LysR transcriptional regulatory family. In terms of assembly, homodimer.

Controls the transcription of genes involved in arginine and lysine metabolism. The protein is HTH-type transcriptional regulator ArgP of Pectobacterium atrosepticum (strain SCRI 1043 / ATCC BAA-672) (Erwinia carotovora subsp. atroseptica).